Reading from the N-terminus, the 140-residue chain is Large ribosomal subunit protein uL14 (140 aa).

This sequence belongs to the universal ribosomal protein uL14 family.

The sequence is that of Large ribosomal subunit protein uL14 (RpL23) from Drosophila melanogaster (Fruit fly).